Here is a 223-residue protein sequence, read N- to C-terminus: Phosphoribosylformylglycinamidine synthase subunit PurQ (223 aa).

Residues 4 to 223 (FAVVVFPGTN…FKGMVEWVRS (220 aa)) enclose the Glutamine amidotransferase type-1 domain. Cysteine 85 acts as the Nucleophile in catalysis. Active-site residues include histidine 196 and glutamate 198.

In terms of assembly, part of the FGAM synthase complex composed of 1 PurL, 1 PurQ and 2 PurS subunits.

The protein localises to the cytoplasm. It catalyses the reaction N(2)-formyl-N(1)-(5-phospho-beta-D-ribosyl)glycinamide + L-glutamine + ATP + H2O = 2-formamido-N(1)-(5-O-phospho-beta-D-ribosyl)acetamidine + L-glutamate + ADP + phosphate + H(+). The enzyme catalyses L-glutamine + H2O = L-glutamate + NH4(+). It participates in purine metabolism; IMP biosynthesis via de novo pathway; 5-amino-1-(5-phospho-D-ribosyl)imidazole from N(2)-formyl-N(1)-(5-phospho-D-ribosyl)glycinamide: step 1/2. Functionally, part of the phosphoribosylformylglycinamidine synthase complex involved in the purines biosynthetic pathway. Catalyzes the ATP-dependent conversion of formylglycinamide ribonucleotide (FGAR) and glutamine to yield formylglycinamidine ribonucleotide (FGAM) and glutamate. The FGAM synthase complex is composed of three subunits. PurQ produces an ammonia molecule by converting glutamine to glutamate. PurL transfers the ammonia molecule to FGAR to form FGAM in an ATP-dependent manner. PurS interacts with PurQ and PurL and is thought to assist in the transfer of the ammonia molecule from PurQ to PurL. This Pyrococcus furiosus (strain ATCC 43587 / DSM 3638 / JCM 8422 / Vc1) protein is Phosphoribosylformylglycinamidine synthase subunit PurQ.